Here is a 197-residue protein sequence, read N- to C-terminus: Pyridoxal 5'-phosphate synthase subunit PdxT (197 aa).

L-glutamine is bound at residue Gly52–Ser54. The active-site Nucleophile is the Cys84. Residues Arg116 and Ile143–Arg144 each bind L-glutamine. Catalysis depends on charge relay system residues His179 and Glu181.

Belongs to the glutaminase PdxT/SNO family. In the presence of PdxS, forms a dodecamer of heterodimers. Only shows activity in the heterodimer.

The catalysed reaction is aldehydo-D-ribose 5-phosphate + D-glyceraldehyde 3-phosphate + L-glutamine = pyridoxal 5'-phosphate + L-glutamate + phosphate + 3 H2O + H(+). The enzyme catalyses L-glutamine + H2O = L-glutamate + NH4(+). It participates in cofactor biosynthesis; pyridoxal 5'-phosphate biosynthesis. Catalyzes the hydrolysis of glutamine to glutamate and ammonia as part of the biosynthesis of pyridoxal 5'-phosphate. The resulting ammonia molecule is channeled to the active site of PdxS. This is Pyridoxal 5'-phosphate synthase subunit PdxT from Ignicoccus hospitalis (strain KIN4/I / DSM 18386 / JCM 14125).